We begin with the raw amino-acid sequence, 391 residues long: 3-ketoacyl-CoA thiolase, peroxisomal (391 aa).

C92 acts as the Acyl-thioester intermediate in catalysis. Active-site proton acceptor residues include H335 and C366.

Belongs to the thiolase-like superfamily. Thiolase family. Homodimer.

It localises to the peroxisome. It catalyses the reaction an acyl-CoA + acetyl-CoA = a 3-oxoacyl-CoA + CoA. It functions in the pathway lipid metabolism; fatty acid metabolism. The protein is 3-ketoacyl-CoA thiolase, peroxisomal (FOX3) of Encephalitozoon cuniculi (strain GB-M1) (Microsporidian parasite).